Reading from the N-terminus, the 158-residue chain is Snaclec coagulation factor X-activating enzyme light chain 2 (158 aa).

Residues 1 to 24 (MGRFISVSFGLLVVFLSLSGTGAG) form the signal peptide. Cystine bridges form between cysteine 27-cysteine 38, cysteine 55-cysteine 152, and cysteine 127-cysteine 144. Positions 34-153 (YRYFCYRVFK…CEERYLFVCK (120 aa)) constitute a C-type lectin domain. N-linked (GlcNAc...) (complex) asparagine glycosylation is present at asparagine 82.

Belongs to the snaclec family. In terms of assembly, heterotrimer; disulfide-linked. The heterotrimer consists of 1 heavy chain (a metalloproteinase) and 2 light chains: LC1 and LC2. In terms of processing, N-glycosylated; probably required for conformation. Removal of easily accessible sugars does not change its functional capacity, but removal of the core sugars with N-glycanase causes a virtually complete loss of enzyme activity, apparently as a result of major conformational changes in the molecule. Not O-glycosylated. Expressed by the venom gland.

It is found in the secreted. In terms of biological role, regulatory subunit of the blood coagulation factor X- and IX-activating enzyme. The enzyme activates coagulation factor X (F10) by cleaving the Arg-Ile bond and is also able to activate coagulation factor IX (F9) and protein S (PROS1) by specific cleavage of Arg-Ile and Arg-Val bonds. May serve as an exosite by which the enzyme recognizes and binds to the Gla domain of factor X (F10) and factor IX (F9) in a calcium-dependent manner. This Daboia siamensis (Eastern Russel's viper) protein is Snaclec coagulation factor X-activating enzyme light chain 2 (LC2).